The following is an 838-amino-acid chain: 1,4-alpha-glucan branching enzyme GlgB 1 (838 aa).

Residues 1–11 (MIPRPPSDDRA) are compositionally biased toward basic and acidic residues. Disordered stretches follow at residues 1 to 98 (MIPR…VSKK) and 116 to 142 (PVSP…SVLG). Over residues 29-57 (KKAAAAKKTAGKKATPAAKATAAKGAVTK) the composition is skewed to low complexity. The Nucleophile role is filled by Asp-513. Glu-566 functions as the Proton donor in the catalytic mechanism. The disordered stretch occupies residues 793 to 822 (TDGARYGGSDVTNPHPVKPEPQGRHGRPAS).

The protein belongs to the glycosyl hydrolase 13 family. GlgB subfamily. In terms of assembly, monomer.

The enzyme catalyses Transfers a segment of a (1-&gt;4)-alpha-D-glucan chain to a primary hydroxy group in a similar glucan chain.. Its pathway is glycan biosynthesis; glycogen biosynthesis. Functionally, catalyzes the formation of the alpha-1,6-glucosidic linkages in glycogen by scission of a 1,4-alpha-linked oligosaccharide from growing alpha-1,4-glucan chains and the subsequent attachment of the oligosaccharide to the alpha-1,6 position. In Streptomyces avermitilis (strain ATCC 31267 / DSM 46492 / JCM 5070 / NBRC 14893 / NCIMB 12804 / NRRL 8165 / MA-4680), this protein is 1,4-alpha-glucan branching enzyme GlgB 1.